The chain runs to 248 residues: ATP synthase subunit a, chloroplastic (248 aa).

A run of 5 helical transmembrane segments spans residues 38–58, 96–116, 135–155, 200–220, and 221–241; these read QVLL…TIAV, VPFI…GALL, INTT…AGLT, LVVA…VMFL, and GLFT…AYIG.

Belongs to the ATPase A chain family. F-type ATPases have 2 components, CF(1) - the catalytic core - and CF(0) - the membrane proton channel. CF(1) has five subunits: alpha(3), beta(3), gamma(1), delta(1), epsilon(1). CF(0) has four main subunits: a, b, b' and c.

It is found in the plastid. Its subcellular location is the chloroplast thylakoid membrane. Functionally, key component of the proton channel; it plays a direct role in the translocation of protons across the membrane. In Pinus thunbergii (Japanese black pine), this protein is ATP synthase subunit a, chloroplastic.